A 373-amino-acid polypeptide reads, in one-letter code: 4-hydroxy-3-methylbut-2-en-1-yl diphosphate synthase (flavodoxin) (373 aa).

The [4Fe-4S] cluster site is built by C270, C273, C305, and E312.

Belongs to the IspG family. The cofactor is [4Fe-4S] cluster.

It carries out the reaction (2E)-4-hydroxy-3-methylbut-2-enyl diphosphate + oxidized [flavodoxin] + H2O + 2 H(+) = 2-C-methyl-D-erythritol 2,4-cyclic diphosphate + reduced [flavodoxin]. The protein operates within isoprenoid biosynthesis; isopentenyl diphosphate biosynthesis via DXP pathway; isopentenyl diphosphate from 1-deoxy-D-xylulose 5-phosphate: step 5/6. Functionally, converts 2C-methyl-D-erythritol 2,4-cyclodiphosphate (ME-2,4cPP) into 1-hydroxy-2-methyl-2-(E)-butenyl 4-diphosphate. The sequence is that of 4-hydroxy-3-methylbut-2-en-1-yl diphosphate synthase (flavodoxin) from Proteus mirabilis (strain HI4320).